Consider the following 152-residue polypeptide: Arginine repressor (152 aa).

Belongs to the ArgR family.

Its subcellular location is the cytoplasm. The protein operates within amino-acid biosynthesis; L-arginine biosynthesis [regulation]. In terms of biological role, regulates arginine biosynthesis genes. This chain is Arginine repressor, found in Lactococcus lactis subsp. cremoris (strain MG1363).